Reading from the N-terminus, the 284-residue chain is Polyamine aminopropyltransferase (284 aa).

The PABS domain maps to 2 to 237 (ELWYTEEQTQ…GYWLFGFASK (236 aa)). S-methyl-5'-thioadenosine is bound at residue Gln-31. Spermidine is bound by residues His-62 and Asp-86. S-methyl-5'-thioadenosine contacts are provided by residues Glu-106 and 137 to 138 (DG). Asp-155 (proton acceptor) is an active-site residue. A spermidine-binding site is contributed by 155 to 158 (DSTD). An S-methyl-5'-thioadenosine-binding site is contributed by Pro-162.

It belongs to the spermidine/spermine synthase family. In terms of assembly, homodimer or homotetramer.

It localises to the cytoplasm. It catalyses the reaction S-adenosyl 3-(methylsulfanyl)propylamine + putrescine = S-methyl-5'-thioadenosine + spermidine + H(+). The protein operates within amine and polyamine biosynthesis; spermidine biosynthesis; spermidine from putrescine: step 1/1. In terms of biological role, catalyzes the irreversible transfer of a propylamine group from the amino donor S-adenosylmethioninamine (decarboxy-AdoMet) to putrescine (1,4-diaminobutane) to yield spermidine. This Alkaliphilus metalliredigens (strain QYMF) protein is Polyamine aminopropyltransferase.